A 303-amino-acid chain; its full sequence is Elongation factor Ts (303 aa).

Positions 80–83 are involved in Mg(2+) ion dislocation from EF-Tu; sequence TDFV.

It belongs to the EF-Ts family.

The protein localises to the cytoplasm. In terms of biological role, associates with the EF-Tu.GDP complex and induces the exchange of GDP to GTP. It remains bound to the aminoacyl-tRNA.EF-Tu.GTP complex up to the GTP hydrolysis stage on the ribosome. This is Elongation factor Ts from Clostridium perfringens (strain SM101 / Type A).